Here is a 2061-residue protein sequence, read N- to C-terminus: Myoferlin (2061 aa).

A C2 1 domain is found at 1-101 (MLRVIVESAS…TGDQSRSLPY (101 aa)). Over 1–2025 (MLRVIVESAS…MKFIVWRRFK (2025 aa)) the chain is Cytoplasmic. Residues 123–172 (GYDPPSAPHPNDLSGPSVPGMGGDGEEDEGDEDRLDNAVRGPGPKGPVGT) form a disordered region. The segment covering 146-156 (DGEEDEGDEDR) has biased composition (acidic residues). Ser174 bears the Phosphoserine mark. C2 domains are found at residues 181–300 (RLTK…RKWL) and 339–474 (DSDD…VEDF). The tract at residues 186-281 (KNSRRMLSNK…RADCLMGEFK (96 aa)) is necessary for interaction with EHD2. A disordered region spans residues 323–342 (LGTGDEPPPERRDRDNDSDD). Ca(2+) contacts are provided by Asp390, Asp396, Asp444, Asp446, and Asp452. N6-acetyllysine is present on Lys553. A Phosphoserine modification is found at Ser729. Position 884 is an N6-acetyllysine (Lys884). The interval 938–967 (ESRYPGGDWKPAEDTYTDANGDKAASPSEL) is disordered. C2 domains follow at residues 1123 to 1251 (GANT…LLWH) and 1282 to 1410 (LPPQ…GKED). The Ca(2+) site is built by Asp1155, Asp1161, Asp1217, and Asp1219. Lys1507 is modified (N6-acetyllysine). C2 domains follow at residues 1536 to 1654 (PAPP…SHCG) and 1772 to 1920 (GPPG…EKCR). Ca(2+) contacts are provided by Asp1569, Asp1575, Asp1624, Asp1626, Asp1891, Ser1894, and Asp1897. Ser1915 bears the Phosphoserine mark. The chain crosses the membrane as a helical span at residues 2026 to 2046 (WVIIGLLFLLILLLFVAVLLY). Topologically, residues 2047-2061 (SLPNYLSMKIVKPNV) are extracellular.

Belongs to the ferlin family. Interacts with DNM2 and KDR. Interacts with EHD1. Interacts with EHD2; the interaction is direct. Interacts with RIPOR2. It depends on Ca(2+) as a cofactor. Expressed in myoblast and endothelial cells (at protein level). Highly expressed in cardiac and skeletal muscles. Also present in lung, and at very low levels in kidney, placenta and brain.

The protein localises to the cell membrane. It is found in the nucleus membrane. Its subcellular location is the cytoplasmic vesicle membrane. Its function is as follows. Calcium/phospholipid-binding protein that plays a role in the plasmalemma repair mechanism of endothelial cells that permits rapid resealing of membranes disrupted by mechanical stress. Involved in endocytic recycling. Implicated in VEGF signal transduction by regulating the levels of the receptor KDR. The polypeptide is Myoferlin (MYOF) (Homo sapiens (Human)).